Here is a 293-residue protein sequence, read N- to C-terminus: Glycine--tRNA ligase alpha subunit (293 aa).

It belongs to the class-II aminoacyl-tRNA synthetase family. Tetramer of two alpha and two beta subunits.

The protein localises to the cytoplasm. It catalyses the reaction tRNA(Gly) + glycine + ATP = glycyl-tRNA(Gly) + AMP + diphosphate. The sequence is that of Glycine--tRNA ligase alpha subunit from Acaryochloris marina (strain MBIC 11017).